The primary structure comprises 266 residues: Putative carbamate hydrolase RutD (266 aa).

The 102-residue stretch at 14-115 (PVVVLISGLG…TVLVSVNGWL (102 aa)) folds into the AB hydrolase-1 domain.

Belongs to the AB hydrolase superfamily. Hydrolase RutD family.

The catalysed reaction is carbamate + 2 H(+) = NH4(+) + CO2. Functionally, involved in pyrimidine catabolism. May facilitate the hydrolysis of carbamate, a reaction that can also occur spontaneously. This Escherichia coli O9:H4 (strain HS) protein is Putative carbamate hydrolase RutD.